The sequence spans 302 residues: Oxygen-dependent coproporphyrinogen-III oxidase (302 aa).

Substrate is bound at residue Ser-94. His-98 and His-108 together coordinate a divalent metal cation. The active-site Proton donor is the His-108. 110 to 112 contacts substrate; the sequence is NVR. Residues His-147 and His-177 each contribute to the a divalent metal cation site. Positions 242-277 are important for dimerization; that stretch reads YVEFNLVYDRGTLFGLQTGGRTESILMSMPPLARWE. A substrate-binding site is contributed by 260–262; the sequence is GGR.

Belongs to the aerobic coproporphyrinogen-III oxidase family. In terms of assembly, homodimer. The cofactor is a divalent metal cation.

The protein localises to the cytoplasm. It catalyses the reaction coproporphyrinogen III + O2 + 2 H(+) = protoporphyrinogen IX + 2 CO2 + 2 H2O. Its pathway is porphyrin-containing compound metabolism; protoporphyrin-IX biosynthesis; protoporphyrinogen-IX from coproporphyrinogen-III (O2 route): step 1/1. Involved in the heme biosynthesis. Catalyzes the aerobic oxidative decarboxylation of propionate groups of rings A and B of coproporphyrinogen-III to yield the vinyl groups in protoporphyrinogen-IX. The chain is Oxygen-dependent coproporphyrinogen-III oxidase from Aeromonas salmonicida (strain A449).